We begin with the raw amino-acid sequence, 426 residues long: Adenylosuccinate synthetase (426 aa).

GTP contacts are provided by residues 12-18 (GDEGKGK) and 40-42 (GHT). Asp-13 functions as the Proton acceptor in the catalytic mechanism. Residues Asp-13 and Gly-40 each coordinate Mg(2+). Residues 13–16 (DEGK), 38–41 (NAGH), Thr-131, Arg-145, Gln-226, Thr-241, and Arg-305 each bind IMP. Catalysis depends on His-41, which acts as the Proton donor. 301–307 (ATTGRKR) provides a ligand contact to substrate. GTP is bound by residues Arg-307, 333 to 335 (KLD), and 415 to 417 (SVG).

It belongs to the adenylosuccinate synthetase family. In terms of assembly, homodimer. It depends on Mg(2+) as a cofactor.

Its subcellular location is the cytoplasm. It catalyses the reaction IMP + L-aspartate + GTP = N(6)-(1,2-dicarboxyethyl)-AMP + GDP + phosphate + 2 H(+). It functions in the pathway purine metabolism; AMP biosynthesis via de novo pathway; AMP from IMP: step 1/2. Functionally, plays an important role in the de novo pathway of purine nucleotide biosynthesis. Catalyzes the first committed step in the biosynthesis of AMP from IMP. In Nitratidesulfovibrio vulgaris (strain ATCC 29579 / DSM 644 / CCUG 34227 / NCIMB 8303 / VKM B-1760 / Hildenborough) (Desulfovibrio vulgaris), this protein is Adenylosuccinate synthetase.